The following is an 892-amino-acid chain: Exo-beta-D-glucosaminidase (892 aa).

The signal sequence occupies residues 1–18 (MLANAIAALLLGSGIASA). A propeptide spanning residues 19 to 28 (AGHGSPLTSK) is cleaved from the precursor. 3 N-linked (GlcNAc...) asparagine glycosylation sites follow: N196, N336, and N440. D464 acts as the Proton donor in catalysis. E539 functions as the Nucleophile in the catalytic mechanism. N-linked (GlcNAc...) asparagine glycosylation is found at N557, N578, N689, and N825.

The protein belongs to the glycosyl hydrolase 2 family. Monomer.

The protein localises to the secreted. The protein resides in the extracellular space. It carries out the reaction Hydrolysis of chitosan or chitosan oligosaccharides to remove successive D-glucosamine residues from the non-reducing termini.. In terms of biological role, hydrolyzes chitosan and chitooligosaccharides with retention of anomeric configuration. Has no activity against beta-D-galactoside, beta-D-glucuronide, beta-D-mannoside, chitin, glycol chitosan, cellulose, N,N'-diacetylchitibiose and pNP-GlcNAc. The sequence is that of Exo-beta-D-glucosaminidase from Hypocrea jecorina (Trichoderma reesei).